The sequence spans 170 residues: Co-chaperone protein HscB homolog (170 aa).

Positions 5-79 constitute a J domain; sequence DHFSLFGLPA…RARYLCEQAG (75 aa).

Belongs to the HscB family. In terms of assembly, interacts with HscA and stimulates its ATPase activity.

Functionally, co-chaperone involved in the maturation of iron-sulfur cluster-containing proteins. Seems to help targeting proteins to be folded toward HscA. This Bordetella petrii (strain ATCC BAA-461 / DSM 12804 / CCUG 43448) protein is Co-chaperone protein HscB homolog.